The primary structure comprises 494 residues: 4-trimethylaminobutyraldehyde dehydrogenase (494 aa).

Position 2 is an N-acetylserine (Ser-2). Lys-30 is subject to N6-acetyllysine; alternate. Residue Lys-30 is modified to N6-succinyllysine; alternate. Lys-59 is modified (N6-succinyllysine). NAD(+) is bound by residues Lys-180 and 232–236 (GSVPT). Catalysis depends on Glu-254, which acts as the Proton acceptor. Cys-288 functions as the Nucleophile in the catalytic mechanism. Lys-298 carries the N6-acetyllysine modification. N6-acetyllysine; alternate is present on Lys-303. An N6-succinyllysine; alternate modification is found at Lys-303. N6-acetyllysine is present on Lys-344. Glu-391 contributes to the NAD(+) binding site.

The protein belongs to the aldehyde dehydrogenase family. As to quaternary structure, homotetramer.

Its subcellular location is the cytoplasm. It is found in the cytosol. It catalyses the reaction 4-(trimethylamino)butanal + NAD(+) + H2O = 4-(trimethylamino)butanoate + NADH + 2 H(+). It carries out the reaction an aldehyde + NAD(+) + H2O = a carboxylate + NADH + 2 H(+). The enzyme catalyses 4-aminobutanal + NAD(+) + H2O = 4-aminobutanoate + NADH + 2 H(+). The catalysed reaction is formaldehyde + NAD(+) + H2O = formate + NADH + 2 H(+). It catalyses the reaction acetaldehyde + NAD(+) + H2O = acetate + NADH + 2 H(+). It carries out the reaction imidazole-4-acetaldehyde + NAD(+) + H2O = imidazole-4-acetate + NADH + 2 H(+). The enzyme catalyses acrolein + NAD(+) + H2O = acrylate + NADH + 2 H(+). The catalysed reaction is (5-hydroxyindol-3-yl)acetaldehyde + NAD(+) + H2O = (5-hydroxyindol-3-yl)acetate + NADH + 2 H(+). It catalyses the reaction 3,4-dihydroxyphenylacetaldehyde + NAD(+) + H2O = 3,4-dihydroxyphenylacetate + NADH + 2 H(+). It carries out the reaction spermine monoaldehyde + NAD(+) + H2O = N-(2-carboxyethyl)spermidine + NADH + 2 H(+). The enzyme catalyses propanal + NAD(+) + H2O = propanoate + NADH + 2 H(+). The catalysed reaction is butanal + NAD(+) + H2O = butanoate + NADH + 2 H(+). It catalyses the reaction pentanal + NAD(+) + H2O = pentanoate + NADH + 2 H(+). It carries out the reaction hexanal + NAD(+) + H2O = hexanoate + NADH + 2 H(+). Its pathway is amine and polyamine biosynthesis; carnitine biosynthesis. Converts gamma-trimethylaminobutyraldehyde into gamma-butyrobetaine with high efficiency (in vitro). Can catalyze the irreversible oxidation of a broad range of aldehydes to the corresponding acids in an NAD-dependent reaction, but with low efficiency. Catalyzes the oxidation of aldehydes arising from biogenic amines and polyamines. This is 4-trimethylaminobutyraldehyde dehydrogenase from Mus musculus (Mouse).